Consider the following 2197-residue polypeptide: RNA1 polyprotein (2197 aa).

Topologically, residues 621–1167 are cytoplasmic; that stretch reads GLTDVFGVPL…YDWVYANGGK (547 aa). Residues 766-933 enclose the SF3 helicase domain; it reads VKRLSDLHKR…EGVAYNPSDP (168 aa). 796–803 serves as a coordination point for ATP; sequence GGPRCGKS. The chain crosses the membrane as a helical span at residues 1168 to 1188; it reads LLLVLAAVILILFFGSACIKL. At 1189 to 1212 the chain is on the lumenal side; the sequence is MQAIFCGAAGGTVSMAAVGKMTVQ. Asn1228 carries an N-linked (GlcNAc...) asparagine; by host glycan. The region spanning 1243 to 1475 is the Peptidase C3 domain; the sequence is LAEAQFNESH…MPRYISHASF (233 aa). Active-site for picornain 3C-like protease activity residues include His1283, Glu1331, and Cys1433. One can recognise a RdRp catalytic domain in the interval 1765 to 1888; it reads SVALNCDYSR…SIKPDTMKYF (124 aa).

Belongs to the nepoviruses RNA1 polyprotein family. In terms of processing, specific enzymatic cleavages by picornain 3C-like protease in vivo yield mature proteins. Picornain 3C-like protease is autocatalytically processed. NTB exists as NTB-VPg polyprotein as well as NTB mature protein. VPg is uridylylated by the polymerase and is covalently linked to the 5'-end of genomic RNA. This uridylylated form acts as a nucleotide-peptide primer for the polymerase.

Its subcellular location is the host endoplasmic reticulum lumen. The protein localises to the host endoplasmic reticulum membrane. It catalyses the reaction RNA(n) + a ribonucleoside 5'-triphosphate = RNA(n+1) + diphosphate. Functionally, picornain 3C-like protease is a thiol protease that cleaves at Gln-|-Gly or Gln-|-Ser sites in the P1 and P2 polyproteins. The VPg-NTB polyprotein may act as a membrane-anchor for the replication complex. In Tomato ringspot virus (isolate raspberry) (ToRSV), this protein is RNA1 polyprotein.